The following is a 159-amino-acid chain: Putative pre-16S rRNA nuclease (159 aa).

The protein belongs to the YqgF nuclease family.

Its subcellular location is the cytoplasm. In terms of biological role, could be a nuclease involved in processing of the 5'-end of pre-16S rRNA. The chain is Putative pre-16S rRNA nuclease from Synechococcus sp. (strain JA-3-3Ab) (Cyanobacteria bacterium Yellowstone A-Prime).